The chain runs to 243 residues: tRNA (guanine-N(1)-)-methyltransferase (243 aa).

Residues G113 and 133–138 (IGDFVL) each bind S-adenosyl-L-methionine.

Belongs to the RNA methyltransferase TrmD family. As to quaternary structure, homodimer.

The protein localises to the cytoplasm. The enzyme catalyses guanosine(37) in tRNA + S-adenosyl-L-methionine = N(1)-methylguanosine(37) in tRNA + S-adenosyl-L-homocysteine + H(+). Functionally, specifically methylates guanosine-37 in various tRNAs. This chain is tRNA (guanine-N(1)-)-methyltransferase, found in Bacillus velezensis (strain DSM 23117 / BGSC 10A6 / LMG 26770 / FZB42) (Bacillus amyloliquefaciens subsp. plantarum).